We begin with the raw amino-acid sequence, 178 residues long: Large ribosomal subunit protein uL6 (178 aa).

It belongs to the universal ribosomal protein uL6 family. In terms of assembly, part of the 50S ribosomal subunit.

This protein binds to the 23S rRNA, and is important in its secondary structure. It is located near the subunit interface in the base of the L7/L12 stalk, and near the tRNA binding site of the peptidyltransferase center. This Francisella tularensis subsp. mediasiatica (strain FSC147) protein is Large ribosomal subunit protein uL6.